Here is a 358-residue protein sequence, read N- to C-terminus: Probable undecaprenyl-phosphate N-acetylglucosaminyl 1-phosphate transferase (358 aa).

Transmembrane regions (helical) follow at residues 10 to 32 (VVAF…RIAI), 53 to 72 (MGGL…SGIY), 76 to 93 (RMTA…LGIL), 105 to 127 (FLIQ…FFSV), 137 to 157 (GWMA…AINL), 164 to 181 (LAAG…VMAL), 186 to 205 (VLIL…FLFY), 218 to 235 (GSLF…LGLY), 240 to 262 (LFSI…FAII), 292 to 311 (MSVL…AIVL), and 316 to 338 (IWLS…EVTG).

It belongs to the glycosyltransferase 4 family. Requires Mg(2+) as cofactor. It depends on Mn(2+) as a cofactor.

It localises to the cell membrane. The enzyme catalyses di-trans,octa-cis-undecaprenyl phosphate + UDP-N-acetyl-alpha-D-glucosamine = N-acetyl-alpha-D-glucosaminyl-di-trans,octa-cis-undecaprenyl diphosphate + UMP. Its pathway is cell wall biogenesis; poly(glucopyranosyl N-acetylgalactosamine 1-phosphate) teichoic acid biosynthesis. It participates in cell wall biogenesis; poly(glycerol phosphate) teichoic acid biosynthesis. Its function is as follows. Catalyzes the formation of undecaprenyl-PP-N-acetylglucosamine. Involved in the synthesis of anionic cell-wall polymers as it mediates the initiation of the linkage unit formation that appears to be common to the two types of teichoic acids attached to the peptidoglycan of B.subtilis; may also be involved in teichuronic acid biosynthesis. This Bacillus subtilis (strain 168) protein is Probable undecaprenyl-phosphate N-acetylglucosaminyl 1-phosphate transferase (tagO).